Reading from the N-terminus, the 183-residue chain is Ribosomal RNA small subunit methyltransferase G (183 aa).

S-adenosyl-L-methionine is bound by residues Gly-60, Phe-65, 111–112 (IE), and Arg-125.

It belongs to the methyltransferase superfamily. RNA methyltransferase RsmG family.

The protein resides in the cytoplasm. It catalyses the reaction guanosine(527) in 16S rRNA + S-adenosyl-L-methionine = N(7)-methylguanosine(527) in 16S rRNA + S-adenosyl-L-homocysteine. Functionally, specifically methylates the N7 position of guanine in position 527 of 16S rRNA. This Campylobacter hominis (strain ATCC BAA-381 / DSM 21671 / CCUG 45161 / LMG 19568 / NCTC 13146 / CH001A) protein is Ribosomal RNA small subunit methyltransferase G.